Here is a 407-residue protein sequence, read N- to C-terminus: Phosphopentomutase (407 aa).

The Mn(2+) site is built by aspartate 10, aspartate 306, histidine 311, aspartate 347, histidine 348, and histidine 359.

This sequence belongs to the phosphopentomutase family. The cofactor is Mn(2+).

It is found in the cytoplasm. The enzyme catalyses 2-deoxy-alpha-D-ribose 1-phosphate = 2-deoxy-D-ribose 5-phosphate. It carries out the reaction alpha-D-ribose 1-phosphate = D-ribose 5-phosphate. It functions in the pathway carbohydrate degradation; 2-deoxy-D-ribose 1-phosphate degradation; D-glyceraldehyde 3-phosphate and acetaldehyde from 2-deoxy-alpha-D-ribose 1-phosphate: step 1/2. Isomerase that catalyzes the conversion of deoxy-ribose 1-phosphate (dRib-1-P) and ribose 1-phosphate (Rib-1-P) to deoxy-ribose 5-phosphate (dRib-5-P) and ribose 5-phosphate (Rib-5-P), respectively. This Yersinia enterocolitica serotype O:8 / biotype 1B (strain NCTC 13174 / 8081) protein is Phosphopentomutase.